The following is a 490-amino-acid chain: 2,3-bisphosphoglycerate-independent phosphoglycerate mutase (490 aa).

Residues D9 and S59 each coordinate Mn(2+). Catalysis depends on S59, which acts as the Phosphoserine intermediate. Substrate-binding positions include H116, 145–146, R175, R181, 246–249, and K319; these read RD and RSDR. 5 residues coordinate Mn(2+): D385, H389, D426, H427, and H444.

The protein belongs to the BPG-independent phosphoglycerate mutase family. In terms of assembly, monomer. Requires Mn(2+) as cofactor.

It carries out the reaction (2R)-2-phosphoglycerate = (2R)-3-phosphoglycerate. It functions in the pathway carbohydrate degradation; glycolysis; pyruvate from D-glyceraldehyde 3-phosphate: step 3/5. Functionally, catalyzes the interconversion of 2-phosphoglycerate and 3-phosphoglycerate. The chain is 2,3-bisphosphoglycerate-independent phosphoglycerate mutase from Helicobacter hepaticus (strain ATCC 51449 / 3B1).